The sequence spans 159 residues: Large ribosomal subunit protein uL11 (159 aa).

It belongs to the universal ribosomal protein uL11 family. Part of the ribosomal stalk of the 50S ribosomal subunit. Interacts with L10 and the large rRNA to form the base of the stalk. L10 forms an elongated spine to which L12 dimers bind in a sequential fashion forming a multimeric L10(L12)X complex.

Its function is as follows. Forms part of the ribosomal stalk which helps the ribosome interact with GTP-bound translation factors. The sequence is that of Large ribosomal subunit protein uL11 from Methanococcus maripaludis (strain C5 / ATCC BAA-1333).